We begin with the raw amino-acid sequence, 115 residues long: Meromycolate extension acyl carrier protein (115 aa).

The region spanning 3–81 (VTQEEIIAGI…DVVTYIQKLE (79 aa)) is the Carrier domain. S41 is modified (O-(pantetheine 4'-phosphoryl)serine).

The protein belongs to the acyl carrier protein (ACP) family. Post-translationally, 4'-phosphopantetheine is transferred from CoA to a specific serine of apo-AcpM.

Its subcellular location is the cytoplasm. Its function is as follows. Acyl carrier protein involved in meromycolate extension. This Mycobacterium leprae (strain TN) protein is Meromycolate extension acyl carrier protein (acpM).